A 333-amino-acid chain; its full sequence is Phosphate acyltransferase (333 aa).

Belongs to the PlsX family. As to quaternary structure, homodimer. Probably interacts with PlsY.

It is found in the cytoplasm. The catalysed reaction is a fatty acyl-[ACP] + phosphate = an acyl phosphate + holo-[ACP]. Its pathway is lipid metabolism; phospholipid metabolism. Catalyzes the reversible formation of acyl-phosphate (acyl-PO(4)) from acyl-[acyl-carrier-protein] (acyl-ACP). This enzyme utilizes acyl-ACP as fatty acyl donor, but not acyl-CoA. The protein is Phosphate acyltransferase of Thermosipho melanesiensis (strain DSM 12029 / CIP 104789 / BI429).